The primary structure comprises 637 residues: Anthranilate synthase, phenazine specific (637 aa).

An anthranilate synthase component I region spans residues 1 to 434 (MSQAAARLME…QRQQTQSDFS (434 aa)). The Glutamine amidotransferase type-1 domain occupies 437-628 (QVLIVDAEDT…LRHALIHTPV (192 aa)). Active-site for GATase activity residues include Cys-517, His-602, and Glu-604.

The enzyme catalyses chorismate + L-glutamine = anthranilate + pyruvate + L-glutamate + H(+). Its pathway is antibiotic biosynthesis; phenazine biosynthesis. Its function is as follows. Involved in the biosynthesis of the antibiotic, phenazine, a nitrogen-containing heterocyclic molecule having important roles in virulence, competition and biological control. This is Anthranilate synthase, phenazine specific (phzE) from Pseudomonas fluorescens.